The chain runs to 305 residues: Calponin-2 (305 aa).

Ser-2 is subject to N-acetylserine. N6-acetyllysine occurs at positions 8 and 25. One can recognise a Calponin-homology (CH) domain in the interval 28–132; it reads PQKEAELRSW…SLLALAGKAK (105 aa). Position 138 is a phosphoserine (Ser-138). Calponin-like repeat units lie at residues 166–191, 206–231, and 245–269; these read IGLQ…RHLY, ISLQ…RHIY, and MSLQ…RQIY.

Belongs to the calponin family. As to expression, smooth muscle, and tissues containing significant amounts of smooth muscle.

Functionally, thin filament-associated protein that is implicated in the regulation and modulation of smooth muscle contraction. It is capable of binding to actin, calmodulin and tropomyosin. The interaction of calponin with actin inhibits the actomyosin Mg-ATPase activity. This chain is Calponin-2 (Cnn2), found in Mus musculus (Mouse).